A 578-amino-acid chain; its full sequence is Putative diflavin flavoprotein A 2 (578 aa).

The interval 39–233 (QQGTTSNSYL…PPPRLYAPAH (195 aa)) is zinc metallo-hydrolase. One can recognise a Flavodoxin-like domain in the interval 262-404 (VALFYASAYG…AANEFAQALK (143 aa)). Positions 429–578 (VNRVVGSLCV…TAIQHRKTSS (150 aa)) are flavodoxin-reductase-like.

The protein in the N-terminal section; belongs to the zinc metallo-hydrolase group 3 family. It in the C-terminal section; belongs to the flavodoxin reductase family. It depends on Fe cation as a cofactor.

Mediates electron transfer from NADH to oxygen, reducing it to water. This modular protein has 3 redox cofactors, in other organisms the same activity requires 2 or 3 proteins. This is Putative diflavin flavoprotein A 2 (dfa2) from Thermosynechococcus vestitus (strain NIES-2133 / IAM M-273 / BP-1).